We begin with the raw amino-acid sequence, 63 residues long: Potassium channel toxin alpha-KTx 21.1 (63 aa).

The N-terminal stretch at 1-27 (MQFSGVVLILISMTLVNFVFFETKVEA) is a signal peptide. Disulfide bonds link Cys33-Cys53, Cys38-Cys58, and Cys42-Cys60.

Belongs to the short scorpion toxin superfamily. Potassium channel inhibitor family. Alpha-KTx 21 subfamily. As to expression, expressed by the venom gland.

It localises to the secreted. Reversibly and voltage-independently blocks voltage-gated potassium channels rKv1.2/KCNA2 (73%) (IC(50)=196 nM), hKv1.3/KCNA3 (50%) (IC(50)=508 nM), Shaker IR (30%), rKv1.6/KCNA6 (22%) (at 0.5 uM). Interaction of Ts15 with Kv1.3/KCNA3 is stronger than its interaction with Kv1.2/KCNA2. The polypeptide is Potassium channel toxin alpha-KTx 21.1 (Tityus serrulatus (Brazilian scorpion)).